A 411-amino-acid polypeptide reads, in one-letter code: Inhibin beta B chain (411 aa).

The first 28 residues, 1–28, serve as a signal peptide directing secretion; the sequence is MDGLPGRALGAACLLLLVAGWLGPEAWG. The segment at 28-69 is disordered; that stretch reads GSPTPPPSPAAPPPPPPPGAPGGSQDTCTSCGGGGGGFRRPE. Residues 29-296 constitute a propeptide that is removed on maturation; the sequence is SPTPPPSPAA…GDSRHRIRKR (268 aa). Positions 30–47 are enriched in pro residues; sequence PTPPPSPAAPPPPPPPGA. A glycan (N-linked (GlcNAc...) asparagine) is linked at Asn-97. 4 disulfide bridges follow: Cys-300-Cys-308, Cys-307-Cys-376, Cys-336-Cys-408, and Cys-340-Cys-410.

It belongs to the TGF-beta family. As to quaternary structure, dimeric, linked by one or more disulfide bonds. Inhibin B is a dimer of alpha and beta-B. Activin B is a homodimer of beta-B. Activin AB is a dimer of beta-A and beta-B. Interacts with FST and FSTL3. Activin B interacts with BMPR2. As to expression, uterus, testis, ovary, lung, kidney, brain, CJ7 embryonic stem cells, and possibly in liver.

It is found in the secreted. Functionally, inhibins and activins inhibit and activate, respectively, the secretion of follitropin by the pituitary gland. Inhibins/activins are involved in regulating a number of diverse functions such as hypothalamic and pituitary hormone secretion, gonadal hormone secretion, germ cell development and maturation, erythroid differentiation, insulin secretion, nerve cell survival, embryonic axial development or bone growth, depending on their subunit composition. Inhibins appear to oppose the functions of activins. In terms of biological role, activin B is a dimer of alpha and beta-B that plays a role in several essential biological processes including embryonic development, stem cell maintenance and differentiation, haematopoiesis, cell proliferation and wound healing. Signals through type I receptor ACVR1C, abundantly expressed in pancreatic beta cells, and type II receptors like ACVR2A. Upon ligand binding, these receptors phosphorylate intracellular signaling mediators SMAD2 and SMAD3, which form a complex with SMAD4, translocate to the nucleus, and regulate gene expression. Plays a crucial role in the induction of hepcidin by inflammation through activation of ACVR1C and subsequent phosphorylation of SMAD1/5/8. Regulates adipocyte lipid metabolism by decreasing non-esterified fatty acids and glycerol release and increases intracellular triglyceride content. Stimulates wound healing by promoting cell migration and hair follicle regeneration through the JNK and ERK signaling pathways downstream of RHOA. Inhibin B is a dimer of alpha and beta-B that plays a crucial role in the regulation of the reproductive system by inhibiting the secretion of follicle-stimulating hormone (FSH) from the anterior pituitary gland. Thereby, maintains reproductive homeostasis in both males and females. Acts as a more potent suppressor of FSH release than inhibin A. Functions as competitive receptor antagonist binding activin type II receptors with high affinity in the presence of the TGF-beta type III coreceptor/TGFBR3L. The sequence is that of Inhibin beta B chain (Inhbb) from Mus musculus (Mouse).